Here is a 370-residue protein sequence, read N- to C-terminus: Proline-rich protein 5-like (370 aa).

Phosphoserine is present on Ser-28. The disordered stretch occupies residues 327-370 (PTFPPPHRQCSSEPSILDSPDEMELEDVASGSQEDSELNCASLS).

This sequence belongs to the PROTOR family. Interacts with the mammalian target of rapamycin complex 2 (mTORC2) which contains MTOR, MLST8, PRR5, RICTOR, MAPKAP1 and DEPTOR. Interacts with RFFL. Interacts (via C-terminus) with ZFP36 (via C-terminus); this interaction may accelerate ZFP36-mediated mRNA decay during stress. Interacts with RICTOR. In terms of processing, ubiquitinated. Ubiquitination by RFFL promotes proteasomal degradation of PRR5L thereby modifying the substrate-specific activity of the mTORC2 complex. Ubiquitination by RFFL is stimulated by LPA/lysophosphatidic acid.

Its function is as follows. Associates with the mTORC2 complex that regulates cellular processes including survival and organization of the cytoskeleton. Regulates the activity of the mTORC2 complex in a substrate-specific manner preventing for instance the specific phosphorylation of PKCs and thereby controlling cell migration. Plays a role in the stimulation of ZFP36-mediated mRNA decay of several ZFP36-associated mRNAs, such as TNF-alpha and GM-CSF, in response to stress. Required for ZFP36 localization to cytoplasmic stress granule (SG) and P-body (PB) in response to stress. This chain is Proline-rich protein 5-like (Prr5l), found in Rattus norvegicus (Rat).